Consider the following 521-residue polypeptide: Probable xyloglucan galactosyltransferase GT14 (521 aa).

Over 1–30 the chain is Cytoplasmic; sequence MRPKNYSQMEKPISITTGKFRTNNNNNHNN. A helical; Signal-anchor for type II membrane protein transmembrane segment spans residues 31–51; the sequence is VWFVVPLFFILCFVLLCFDYS. Residues 52 to 521 are Lumenal-facing; sequence ALFTDTDETA…SPYEEPQVLA (470 aa). The disordered stretch occupies residues 72-92; sequence TSSEFTKDDNFSRFPDDPSPD. The span at 76–87 shows a compositional bias: basic and acidic residues; the sequence is FTKDDNFSRFPD. Residues asparagine 81, asparagine 177, asparagine 203, asparagine 249, asparagine 265, and asparagine 411 are each glycosylated (N-linked (GlcNAc...) asparagine). The tract at residues 492 to 521 is disordered; the sequence is RQGKDGSDGFDDRDDYKYTFSPYEEPQVLA.

The protein belongs to the glycosyltransferase 47 family. In terms of tissue distribution, expressed in roots, hypocotyls, cotyledons, leaves, stems, stamens and carpels.

Its subcellular location is the golgi apparatus membrane. Functionally, functions in xyloglucan synthesis by adding side chains to the xylosylated glucan backbone. Involved in the galactosylation of hemicellulose xyloglucan. The chain is Probable xyloglucan galactosyltransferase GT14 from Arabidopsis thaliana (Mouse-ear cress).